A 330-amino-acid polypeptide reads, in one-letter code: 6-methylsalicylic acid decarboxylase acuB (330 aa).

4 residues coordinate Zn(2+): H6, H8, H156, and D276.

This sequence belongs to the metallo-dependent hydrolases superfamily. ACMSD family. In terms of assembly, monomer.

Its subcellular location is the cytoplasm. It is found in the cytosol. The enzyme catalyses 6-methylsalicylate + H(+) = 3-methylphenol + CO2. Its pathway is secondary metabolite biosynthesis. Functionally, 6-methylsalicylic acid decarboxylase; part of the gene cluster that mediates the biosynthesis of aculins. The pathway begins with the synthesis of 6-methylsalicylic acid by the polyketide synthase (PKS) acuA via condensation of acetate and malonate units. The 6-methylsalicylic acid decarboxylase acuB then catalyzes the decarboxylation of 6-methylsalicylic acid to yield m-cresol (also known as 3-methylphenol). These first reactions occur in the cytosol. The intermediate m-cresol is then transported into the endoplasmic reticulum where the cytochrome P450 monooxygenase acuC converts it to m-hydroxybenzyl alcohol, which is further converted to gentisyl alcohol by the cytochrome P450 monooxygenase acuD. Gentisyl alcohol is further oxidized by the oxidoreductase acuE that probably catalyzes hydroxylation of the aromatic ring. The aromatic system might then be opened by oxidation through a Baeyer-Villiger type of oxidation, which could be catalyzed by acuF, with the carboxylic acid at C-1 subsequently reduced to an aldehyde by acuG. Subsequently, a hemiacetal is formed, before the dehydrogenase acuH would reduce the double bond between C-4 and C-6. Finally, keto-enol tautomerism results in formation of aculinic acid, which exists as two diastereomers (both R/S configurations at C-1) by non-enzymatic hemiacetal formation. The carboxypeptidase acuI could be involved in the linking of aculinic acid to an aculene A moiety produced by the aculene biosynthesis cluster and which leads to the production of aculin A. AcuI may also be involved in the attachment of proline to aculinic acid to form epi-aculins A and B. The sequence is that of 6-methylsalicylic acid decarboxylase acuB from Aspergillus aculeatus (strain ATCC 16872 / CBS 172.66 / WB 5094).